The sequence spans 516 residues: BAR/IMD domain-containing adapter protein 2-like 2 (516 aa).

One can recognise an IMD domain in the interval 1–227 (MSGVNSDLLH…PTPLDQEAQL (227 aa)). The disordered stretch occupies residues 200–273 (ADGWKEKVSE…SSSVGESLGL (74 aa)). Residues 201 to 212 (DGWKEKVSESRS) show a composition bias toward basic and acidic residues. Positions 226 to 236 (QLKSSVGSLLQ) are enriched in polar residues. Residues 238 to 247 (GDREMDREPL) show a composition bias toward basic and acidic residues. A compositionally biased stretch (low complexity) spans 249–270 (RVPSRAPSPLPSRSRSSSVGES). The SH3 domain occupies 274 to 337 (GGGRSMRAIV…PAAYVASTED (64 aa)). Positions 355-376 (LLEPTSQSESDTQTYSEVSSPV) are enriched in polar residues. The interval 355 to 516 (LLEPTSQSES…TNDRSAPRIQ (162 aa)) is disordered. Basic and acidic residues predominate over residues 434–450 (PDRRAESHFESKVELKN). The segment covering 454 to 465 (LPPPAPPLPNSP) has biased composition (pro residues).

Its subcellular location is the cell membrane. Its function is as follows. Phosphoinositides-binding protein that induces the formation of planar or gently curved membrane structures. This is BAR/IMD domain-containing adapter protein 2-like 2 (baiap2l2) from Danio rerio (Zebrafish).